A 282-amino-acid polypeptide reads, in one-letter code: DNA-dependent metalloprotease WSS1 homolog 2 (282 aa).

Residues 1-75 (MELKFSCRGN…CLIRQDKDIV (75 aa)) form the Ubiquitin-like domain. The WLM domain maps to 99–274 (PHTTPKPASI…LLAAAERRKQ (176 aa)). Position 202 (His-202) interacts with Zn(2+). Residue Glu-203 is part of the active site. Residues His-206 and His-212 each coordinate Zn(2+). The segment at 234–282 (GKPGSYVSDRASYTPQQDNDDEDQKNHRRDLLLAAAERRKQSGSKVQKE) is disordered. Positions 269-282 (AERRKQSGSKVQKE) are enriched in basic and acidic residues.

It belongs to the peptidase M3 family. WSS1-like metalloprotease (WLM) subfamily. Requires Zn(2+) as cofactor.

The protein localises to the cytoplasm. Its subcellular location is the nucleus. In terms of biological role, metalloendopeptidase that acts selectively on DNA-binding proteins. DNA is needed to bring the protease and substrates together to enable proteolysis. Involved in the repair of toxic DNA-protein cross-links (DPCs) such as covalently trapped topoisomerase 1 (TOP1) adducts on DNA lesions or DPCs induced by reactive compounds such as formaldehyde. This chain is DNA-dependent metalloprotease WSS1 homolog 2, found in Schizosaccharomyces pombe (strain 972 / ATCC 24843) (Fission yeast).